The sequence spans 354 residues: NADH-quinone oxidoreductase subunit H (354 aa).

Transmembrane regions (helical) follow at residues 22–42 (ILIRAVIIVVPLLLCVAYLIL), 91–111 (YLIAPLMVLMPAVAVWAVIPF), 124–144 (LLYVMAISSVGVYGVILAGWA), 168–188 (MGFALVTVLMVAGSLNLSAIV), 203–223 (ILSWNWLPLLPMFGVYFISGV), 255–275 (LFFLAEYINMIIISTMTALMF), 291–311 (IPGFFWLVIKVFLLLSVFIWI), and 326–346 (LGWKVFIPLTVAWLIIVAIWI).

This sequence belongs to the complex I subunit 1 family. As to quaternary structure, NDH-1 is composed of 14 different subunits. Subunits NuoA, H, J, K, L, M, N constitute the membrane sector of the complex.

It localises to the cell inner membrane. It catalyses the reaction a quinone + NADH + 5 H(+)(in) = a quinol + NAD(+) + 4 H(+)(out). In terms of biological role, NDH-1 shuttles electrons from NADH, via FMN and iron-sulfur (Fe-S) centers, to quinones in the respiratory chain. The immediate electron acceptor for the enzyme in this species is believed to be ubiquinone. Couples the redox reaction to proton translocation (for every two electrons transferred, four hydrogen ions are translocated across the cytoplasmic membrane), and thus conserves the redox energy in a proton gradient. This subunit may bind ubiquinone. This is NADH-quinone oxidoreductase subunit H from Cupriavidus necator (strain ATCC 17699 / DSM 428 / KCTC 22496 / NCIMB 10442 / H16 / Stanier 337) (Ralstonia eutropha).